Here is a 125-residue protein sequence, read N- to C-terminus: Multifunctional methyltransferase subunit TRM112-like protein (125 aa).

Residues 2-121 (KLFVHNFMSS…RDGIPNMLKV (120 aa)) form the TRM112 domain.

Belongs to the TRM112 family.

The protein resides in the nucleus. It localises to the nucleoplasm. Its subcellular location is the cytoplasm. It is found in the perinuclear region. In terms of biological role, acts as an activator of both RNA and protein methyltransferases. This is Multifunctional methyltransferase subunit TRM112-like protein from Caenorhabditis elegans.